A 378-amino-acid chain; its full sequence is tRNA-specific 2-thiouridylase MnmA (378 aa).

ATP-binding positions include 6–13 (AMSGGVDS) and Leu-32. Catalysis depends on Cys-101, which acts as the Nucleophile. A disulfide bond links Cys-101 and Cys-199. Residue Gly-125 coordinates ATP. Residues 148 to 150 (KDQ) are interaction with tRNA. The Cysteine persulfide intermediate role is filled by Cys-199.

Belongs to the MnmA/TRMU family.

The protein resides in the cytoplasm. The catalysed reaction is S-sulfanyl-L-cysteinyl-[protein] + uridine(34) in tRNA + AH2 + ATP = 2-thiouridine(34) in tRNA + L-cysteinyl-[protein] + A + AMP + diphosphate + H(+). Functionally, catalyzes the 2-thiolation of uridine at the wobble position (U34) of tRNA, leading to the formation of s(2)U34. The sequence is that of tRNA-specific 2-thiouridylase MnmA from Micrococcus luteus (strain ATCC 4698 / DSM 20030 / JCM 1464 / CCM 169 / CCUG 5858 / IAM 1056 / NBRC 3333 / NCIMB 9278 / NCTC 2665 / VKM Ac-2230) (Micrococcus lysodeikticus).